We begin with the raw amino-acid sequence, 618 residues long: Dihydroxy-acid dehydratase (618 aa).

A Mg(2+)-binding site is contributed by Asp-81. Cys-122 provides a ligand contact to [2Fe-2S] cluster. Asp-123 and Lys-124 together coordinate Mg(2+). At Lys-124 the chain carries N6-carboxylysine. Cys-197 contributes to the [2Fe-2S] cluster binding site. Glu-493 is a binding site for Mg(2+). The active-site Proton acceptor is the Ser-519.

It belongs to the IlvD/Edd family. In terms of assembly, homodimer. [2Fe-2S] cluster is required as a cofactor. Mg(2+) serves as cofactor.

The catalysed reaction is (2R)-2,3-dihydroxy-3-methylbutanoate = 3-methyl-2-oxobutanoate + H2O. The enzyme catalyses (2R,3R)-2,3-dihydroxy-3-methylpentanoate = (S)-3-methyl-2-oxopentanoate + H2O. Its pathway is amino-acid biosynthesis; L-isoleucine biosynthesis; L-isoleucine from 2-oxobutanoate: step 3/4. It functions in the pathway amino-acid biosynthesis; L-valine biosynthesis; L-valine from pyruvate: step 3/4. Its function is as follows. Functions in the biosynthesis of branched-chain amino acids. Catalyzes the dehydration of (2R,3R)-2,3-dihydroxy-3-methylpentanoate (2,3-dihydroxy-3-methylvalerate) into 2-oxo-3-methylpentanoate (2-oxo-3-methylvalerate) and of (2R)-2,3-dihydroxy-3-methylbutanoate (2,3-dihydroxyisovalerate) into 2-oxo-3-methylbutanoate (2-oxoisovalerate), the penultimate precursor to L-isoleucine and L-valine, respectively. The chain is Dihydroxy-acid dehydratase from Bordetella avium (strain 197N).